The chain runs to 157 residues: UPF0251 protein CLK_0815 (157 aa).

This sequence belongs to the UPF0251 family.

The sequence is that of UPF0251 protein CLK_0815 from Clostridium botulinum (strain Loch Maree / Type A3).